The primary structure comprises 115 residues: U31-theraphotoxin-Cg1b (115 aa).

An N-terminal signal peptide occupies residues 1-18 (MKLCVIIIASLMVASVSG). The propeptide occupies 19–51 (RLRKIKGTELDKKMLLEKLGHGMDIRFEETPRE). 4 disulfides stabilise this stretch: Cys-52–Cys-67, Cys-60–Cys-73, Cys-64–Cys-113, and Cys-66–Cys-86.

This sequence belongs to the neurotoxin 03 (Tx2) family. 02 subfamily. As to expression, expressed by the venom gland.

It localises to the secreted. Functionally, probable ion channel inhibitor. This chain is U31-theraphotoxin-Cg1b, found in Chilobrachys guangxiensis (Chinese earth tiger tarantula).